Here is a 385-residue protein sequence, read N- to C-terminus: Protein pelota homolog (385 aa).

This sequence belongs to the eukaryotic release factor 1 family. Pelota subfamily. In terms of assembly, component of the Pelota-HBS1L complex, also named Dom34-Hbs1 complex, composed of PELO and HBS1L. Requires a divalent metal cation as cofactor.

The protein localises to the cytoplasm. Component of the Pelota-HBS1L complex, a complex that recognizes stalled ribosomes and triggers the No-Go Decay (NGD) pathway. In the Pelota-HBS1L complex, PELO recognizes ribosomes stalled at the 3' end of an mRNA and engages stalled ribosomes by destabilizing mRNA in the mRNA channel. Following mRNA extraction from stalled ribosomes by the SKI complex, the Pelota-HBS1L complex promotes recruitment of ABCE1, which drives the disassembly of stalled ribosomes, followed by degradation of damaged mRNAs as part of the NGD pathway. The sequence is that of Protein pelota homolog (pelo) from Danio rerio (Zebrafish).